We begin with the raw amino-acid sequence, 692 residues long: ABC transporter F family member 5 (692 aa).

A disordered region spans residues 64–95 (EIESLFSKQPSQQDSDRKRNGKSSKNGASGIS). The segment covering 86–95 (SSKNGASGIS) has biased composition (polar residues). ABC transporter domains follow at residues 98–356 (VKLE…ETQN) and 425–640 (VNVK…TKEL). Residues 130 to 137 (GVNGAGKT) and 457 to 464 (GPNGCGKS) each bind ATP. Positions 644–692 (AELEEKAPKVKAKSKMSKAEKEARKKQKMQAFQQAKQKSKASKNSKRWN) are disordered. Over residues 680-692 (QKSKASKNSKRWN) the composition is skewed to basic residues.

This sequence belongs to the ABC transporter superfamily. ABCF family. EF3 (TC 3.A.1.121) subfamily.

This Arabidopsis thaliana (Mouse-ear cress) protein is ABC transporter F family member 5 (ABCF5).